Consider the following 97-residue polypeptide: YcgL domain-containing protein Tcr_0238 (97 aa).

The YcgL domain occupies 3-87; it reads LLVSAYKSAK…SEIEKMGDMP (85 aa). The tract at residues 78–97 is disordered; it reads SEIEKMGDMPPPPEHLDNIF.

The polypeptide is YcgL domain-containing protein Tcr_0238 (Hydrogenovibrio crunogenus (strain DSM 25203 / XCL-2) (Thiomicrospira crunogena)).